The following is an 886-amino-acid chain: Conserved oligomeric Golgi complex subunit 1 (886 aa).

The segment covering 834-846 (SAERKSPIQEPVE) has biased composition (basic and acidic residues). The segment at 834–886 (SAERKSPIQEPVEKTATTTPTRKSGGNGARKGDSSKSKSSAASFFGMSQEWFR) is disordered. Ser839 bears the Phosphoserine mark. Polar residues predominate over residues 848 to 857 (TATTTPTRKS).

It belongs to the COG1 family. As to quaternary structure, component of the conserved oligomeric Golgi complex which is composed of eight different subunits and is required for normal Golgi morphology and localization.

It localises to the golgi apparatus membrane. Functionally, required for normal Golgi function. The polypeptide is Conserved oligomeric Golgi complex subunit 1 (Drosophila melanogaster (Fruit fly)).